A 33-amino-acid polypeptide reads, in one-letter code: Large ribosomal subunit protein uL24 (33 aa).

This sequence belongs to the universal ribosomal protein uL24 family. Component of the large ribosomal subunit.

The protein localises to the cytoplasm. Functionally, component of the large ribosomal subunit. The ribosome is a large ribonucleoprotein complex responsible for the synthesis of proteins in the cell. This Xenopus laevis (African clawed frog) protein is Large ribosomal subunit protein uL24 (rpl26).